The primary structure comprises 689 residues: MKPVHERSQECLPPKKRDLPVTSEDMGRTTSCSTNHTPSSDASEWSRGVVVAGQSQAGARVSLGGDGAEAITGLTVDQYGMLYKVAVPPATFSPTGLPSVVNMSPLPPTFNVASSLIQHPGIHYPPLHYAQLPSTSLQFIGSPYSLPYAVPPNFLPSPLLSPSANLATSHLPHFVPYASLLAEGATPPPQAPSPAHSFNKAPSATSPSGQLPHHSSTQPLDLAPGRMPIYYQMSRLPAGYTLHETPPAGASPVLTPQESQSALEAAAANGGQRPRERNLVRRESEALDSPNSKGEGQGLVPVVECVVDGQLFSGSQTPRVEVAAPAHRGTPDTDLEVQRVVGALASQDYRVVAAQRKEEPSPLNLSHHTPDHQGEGRGSARNPAELAEKSQARGFYPQSHQEPVKHRPLPKAMVVANGNLVPTGTDSGLLPVGSEILVASSLDVQARATFPDKEPTPPPITSSHLPSHFMKGAIIQLATGELKRVEDLQTQDFVRSAEVSGGLKIDSSTVVDIQESQWPGFVMLHFVVGEQQSKVSIEVPPEHPFFVYGQGWSSCSPGRTTQLFSLPCHRLQVGDVCISISLQSLNSNSVSQASCAPPSQLGPPRERPERTVLGSRELCDSEGKSQPAGEGSRVVEPSQPESGAQACWPAPSFQRYSMQGEEARAALLRPSFIPQEVKLSIEGRSNAGK.

Over residues 1-19 (MKPVHERSQECLPPKKRDL) the composition is skewed to basic and acidic residues. 3 disordered regions span residues 1 to 46 (MKPV…SEWS), 185 to 223 (ATPPPQAPSPAHSFNKAPSATSPSGQLPHHSSTQPLDLA), and 242 to 297 (LHET…GEGQ). Residues 20–197 (PVTSEDMGRT…PPQAPSPAHS (178 aa)) form an interaction with NCOR2 and ATXN1 region. Residues 20–197 (PVTSEDMGRT…PPQAPSPAHS (178 aa)) form a self-association region. 2 stretches are compositionally biased toward polar residues: residues 28–43 (RTTSCSTNHTPSSDAS) and 200–219 (KAPSATSPSGQLPHHSSTQP). The segment covering 257–268 (QESQSALEAAAA) has biased composition (low complexity). A compositionally biased stretch (basic and acidic residues) spans 273-285 (RPRERNLVRRESE). S284 is subject to Phosphoserine. Position 330 is a phosphothreonine (T330). The disordered stretch occupies residues 357 to 405 (KEEPSPLNLSHHTPDHQGEGRGSARNPAELAEKSQARGFYPQSHQEPVK). S361 carries the phosphoserine modification. The AXH domain occupies 457–588 (PPPITSSHLP…SISLQSLNSN (132 aa)). S615 carries the post-translational modification Phosphoserine. A disordered region spans residues 617–647 (ELCDSEGKSQPAGEGSRVVEPSQPESGAQAC).

This sequence belongs to the ATXN1 family. As to quaternary structure, homodimer. Interacts with CIC. Interacts (via AXH domain) with NCOR2. Interacts with ATXN1. Directly interacts with RBPJ; this interaction is disrupted in the presence of Notch intracellular domain. Competes with ATXN1 for RBPJ-binding. Found in a complex with CIC and ATXN1. As to expression, expressed in cerebellum and cerebral cortex.

Its subcellular location is the nucleus. The protein localises to the cell projection. It localises to the dendrite. Its function is as follows. Chromatin-binding factor that repress Notch signaling in the absence of Notch intracellular domain by acting as a CBF1 corepressor. Binds to the HEY promoter and might assist, along with NCOR2, RBPJ-mediated repression. Can suppress ATXN1 cytotoxicity in spinocerebellar ataxia type 1 (SCA1). In concert with CIC and ATXN1, involved in brain development. This is Ataxin-1-like (ATXN1L) from Homo sapiens (Human).